Here is an 83-residue protein sequence, read N- to C-terminus: Small ribosomal subunit protein bS16 (83 aa).

This sequence belongs to the bacterial ribosomal protein bS16 family.

The chain is Small ribosomal subunit protein bS16 from Albidiferax ferrireducens (strain ATCC BAA-621 / DSM 15236 / T118) (Rhodoferax ferrireducens).